An 84-amino-acid chain; its full sequence is Large ribosomal subunit protein bL31B (84 aa).

It belongs to the bacterial ribosomal protein bL31 family. Type B subfamily. As to quaternary structure, part of the 50S ribosomal subunit.

This Parabacteroides distasonis (strain ATCC 8503 / DSM 20701 / CIP 104284 / JCM 5825 / NCTC 11152) protein is Large ribosomal subunit protein bL31B.